The sequence spans 3305 residues: MGKPLSRPDCLRRNPTCLGKGEDEDGYIEDCYVPQRSIYDTMRINEQIDQGSKLNQTSKSTMEKMEGSTISSNGTLGASSNVFEARGPEGKKLDERIIFDALKLSSDVQKSAPVPPRRRPNAERKDNVNRRSWKSFMPPNFPEFAERMEASLSEVSEAGASNPSLQEKKESSSALTESSGHFDHREPQSESVTLEHMSKSVDIPEVQNVKNLRDCQDFKFQQHSESSPHEFQPLGSEAAAASGNTDEMQEHRFSSATWPRAMKSSSKGGFSEKQYPLGDTACAVELPPLSPCLSEELLDPELHMLITPSLREKTESELKFEEDERWIMMEAEEEWEEEKLSEERKSLVTNEETSLADPLEESDQANSVPAVEDGSDRVAVSGTSDHLALHQMCCSVDLQPTRDQLASVPRGSPPDCTCVPAGDTVISEVKNRPDQGLEGLTSGLQCPVEAEQLSDTDSVQMFLELEKECLCEEGVTSSAELLSQASSEGLAPTQDAEDSLLISHFPGAALEQEQHVGFLSVRIKDPDTGLDGEYCNALDSSQVPKAVELCAQPDSGRDASTISKECEKVPFSPKIGGEFKLLADLEPHSELDTGGLLNSNLRASCEENLPVFIASELAKENGNLSQVDCSQTEGNVEEYMERIPLSFAFNYEQDVTSGPEVEVFSSDSNLLTDEIHLESGKGALISQEDSNLASLGNVDLCELSMEKVCDKDGETKEPGCQGKLLGNGAPAQFPTDFQRRSSESEVLSLHLLAGELRLNKAGAETMSDREPQLSMALSQEGELEMRDLDSTLNIFPEEQISKASNTVPGLEEWISSQQRPVPAAVVPMVENALDAVTPMPGEDIPAVALTASEGPAANASASDGTAAATPIVPIPEEDIPGASVVILVEDVMTAAISAPEQAAASSGAVPPVETVTVPIIDEDVTSEEPDTQAAEMFLPEEPAIPTPAGPTAEEPDTPTVPVSTAEEPSMPPPAGPTPEESAAPTLKEPTPEKPDTQVVSSSIPEWSATPATAVPAKEIFSPDGPFLEGTTHTDSVPISEETPVLENASSPGMGIKECLDSSAFGIKEVPGTMIHGKVPLAATDGLNSHELFQKDQVDPLQVKLQQVNGLGQGLIQSAGKNCDVQGLEHDMDEINTRWNTLNKKVAQRIAQLQEALLHCGKFQDALEPLLSWLTDTEELIANQKPPSAEYKVVKAQIQEQKLLQRLLDDRKATVDMLQAEGGRIAQSAELADREKITGQLESLERRWTDLLSKAAARQKQLEDILVLAKQFHETAEPISDFLSVTEKKLANSEPVGTQTAKIHQQIIRHKALEEEIENHATDVHQAVKIGQSLSSLTCPAEQGIMSEKLDSLQARYSEIQDRCCRKASLLEQALFNARLFGEDEVEVLNWLAEVEDKLSTVFVKDYRQDVLQKQHADHLALNEEIINRKKNVDQAIKNGQALLKQTTGEEVLLIQEKLDGIKTRYADITLTSSKALRTLEQARQLATKFHSTYEELTGWLREAEEELAASGGQSPTGEQIPQFQQRQKELKKEVMEHRLVLDTVNEVSHALLELVPWRAREGLDKLVSDANEQYKLISDTVGQRVDEIDAAIQRSQQYEQAADAELAWVAETKRKLMALGPIRLEQDQTTAQLQVQKAFSIDIIRHKDSMDELFSHRGEIFSTCGEEQKAVLQEKTECLIQQYEAVSLLNSERYARLERAQVLVNQFWETYEELSPWAEETLALIAQLPPPAVDHEQLRQQQEEMRQLRESIAEHKPHIDKILKIGPQLKELNPEEGKMVEEKYQKAENMYAQIKDEVRQRALALDEAVSQSAQFHDKIEPMLETLENLSSRLRMPPLIPAEVDKIRECISDNKSATVELEKLQPSFEALKRRGEELIGRSQGADKDLAAKEIQDKLDQMVFFWEDIKARSEEREIKFLDVLELAEKFWYDMAALLTTIKDTQDIVHDLESPGIDPSIIKQQVEAAETIKEETDGLHEELEFIRILGADLIFACGETEKPEVKKSIDEMNNAWENLNKTWKERLEKLEDAMQAAVQYQDTLQAMFDWLDNTVIKLCTMPPVGTDLNTVKDQLNEMKEFKVEVYQQQIEMEKLNHQGELMLKKATDETDRDIIREPLTELKHLWENLGEKIAHRQHKLEGALLALGQFQHALEELMSWLTHTEELLDAQRPISGDPKVIEVELAKHHVLKNDVLAHQATVATVNKAGSELLESSAGDDASSLRSRLETMNQCWESVLQKTEEREQQLQSTLQQAQGFHSEIEDFLLELNRMENQLSASKPTGGLPETAREQLDTHMELHSQLRAKEEIYNQLLDKGRLMLLSRGDSGSGSKTEQSVALLEQKWHAVSSKVEERKLEEALSLATEFQNSLQEFINWLTLAEQSLNIASPPSLILNTVLSQIEEHKVFANEVNDHRDQIIELDQTGNQLKFLSQKQDVVLIKNLLVSVQSRWEKVVQRSIERGRSLDDARKRAKQFHEAWKKLIDWLEDAESHLDSELEISNDPDKIKLQLSKHKEFQKTLGGKQPVYDTTIRTGRALKEKTLLAGDTQKLDNLLGEVRDKWDTVCGKSVERQHKLEEALLFSGQFMDALQALVDWLYKVEPQLAEDQPVHGDLDLVMNLMDAHKVFQKELGKRTGTVQVLKRSGRELIEGSRDDTTWVKGQLQELSTRWDTVCKLSVSKQSRLEQALKQAEEFRDTVHMLLEWLSEAEQTLRFRGALPDDTEALQSLIDTHKEFMKKVEEKRVDVNTAVAMGEAILAVCHPDCITTIKHWITIIRARFEEVLTWAKQHQQRLETALSELVANAELLEELLAWIQWAETTLIQRDQEPIPQNIDRVKALITEHQSFMEEMTRKQPDVDRVTKTYKRKSVEPTHAPFMEKSRSGSRKSLNQPTPPPMPILSQSEAKNPRINQLSARWQQVWLLALERQRKLNDALDRLEELKEFANFDFDVWRKKYMRWMNHKKSRVMDFFRRIDKDQDGKITRQEFIDGILASKFPTTKLEMTAVADIFDRDGDGYIDYYEFVAALHPNKDAYRPTTDADKIEDEVTRQVAQCKCAKRFQVEQIGENKYRFGDSQQLRLVRILRSTVMVRVGGGWMALDEFLVKNDPCRARGRTNIELREKFILPEGASQGMTPFRSRGRRSKPSSRAASPTRSSSSASQSNHSCTSMPSSPATPASGTKVISSSGSKLKRPTPAFHSSRTSLAGDTSNSSSPASTGAKANRADPKKSASRPGSRAGSRAGSRASSRRGSDASDFDLLETQSACSDTSESSAAGGQGSSRRGLTKPSKIPTMSKKTTTASPRTPGPKR.

Disordered regions lie at residues 1 to 24, 108 to 140, 152 to 202, 239 to 272, 333 to 381, 941 to 1007, and 2865 to 2896; these read MGKPLSRPDCLRRNPTCLGKGEDE, VQKSAPVPPRRRPNAERKDNVNRRSWKSFMPPN, LSEV…KSVD, AAASGNTDEMQEHRFSSATWPRAMKSSSKGGFSE, EEWE…VAVS, EPAI…PEWS, and SVEPTHAPFMEKSRSGSRKSLNQPTPPPMPIL. Over residues 120-129 the composition is skewed to basic and acidic residues; sequence PNAERKDNVN. 2 consecutive EF-hand domains span residues 2958-2993 and 2994-3029; these read HKKSRVMDFFRRIDKDQDGKITRQEFIDGILASKFP and TTKLEMTAVADIFDRDGDGYIDYYEFVAALHPNKDA. Positions 2971, 2973, 2975, 2977, 2982, 3007, 3009, 3011, 3013, and 3018 each coordinate Ca(2+). Residues 3034–3106 form the GAR domain; it reads TDADKIEDEV…EFLVKNDPCR (73 aa). The disordered stretch occupies residues 3122-3305; that stretch reads PEGASQGMTP…ASPRTPGPKR (184 aa). Low complexity predominate over residues 3142-3176; the sequence is SSRAASPTRSSSSASQSNHSCTSMPSSPATPASGT. The span at 3193 to 3212 shows a compositional bias: polar residues; that stretch reads FHSSRTSLAGDTSNSSSPAS. Residues 3227–3241 are compositionally biased toward low complexity; that stretch reads SRPGSRAGSRAGSRA. The span at 3256-3266 shows a compositional bias: polar residues; it reads ETQSACSDTSE. Residues 3267–3278 show a composition bias toward low complexity; sequence SSAAGGQGSSRR.

The protein resides in the cytoplasm. Its subcellular location is the cytoskeleton. This Mus musculus (Mouse) protein is Microtubule-actin cross-linking factor 1, isoforms 6/7.